A 455-amino-acid chain; its full sequence is tRNA-2-methylthio-N(6)-dimethylallyladenosine synthase (455 aa).

One can recognise an MTTase N-terminal domain in the interval 10–130 (RKVFIKTYGC…LPDALKRVRR (121 aa)). [4Fe-4S] cluster contacts are provided by C19, C55, C93, C171, C175, and C178. One can recognise a Radical SAM core domain in the interval 157-389 (RSRGVTAFLT…QALLLRQQKE (233 aa)). A TRAM domain is found at 392 to 454 (ESLVGKTMDV…PNSLFAEVAG (63 aa)).

The protein belongs to the methylthiotransferase family. MiaB subfamily. In terms of assembly, monomer. Requires [4Fe-4S] cluster as cofactor.

The protein localises to the cytoplasm. The catalysed reaction is N(6)-dimethylallyladenosine(37) in tRNA + (sulfur carrier)-SH + AH2 + 2 S-adenosyl-L-methionine = 2-methylsulfanyl-N(6)-dimethylallyladenosine(37) in tRNA + (sulfur carrier)-H + 5'-deoxyadenosine + L-methionine + A + S-adenosyl-L-homocysteine + 2 H(+). In terms of biological role, catalyzes the methylthiolation of N6-(dimethylallyl)adenosine (i(6)A), leading to the formation of 2-methylthio-N6-(dimethylallyl)adenosine (ms(2)i(6)A) at position 37 in tRNAs that read codons beginning with uridine. In Agrobacterium fabrum (strain C58 / ATCC 33970) (Agrobacterium tumefaciens (strain C58)), this protein is tRNA-2-methylthio-N(6)-dimethylallyladenosine synthase.